Consider the following 85-residue polypeptide: MASFKIVIVCLALLVAVACARRRDMMSDDELDFHLSKRGIPCACDSDGPDIRSASLSGIVWMGSCPSGWKKCKSYYSIVADCCNQ.

A signal peptide spans 1–20 (MASFKIVIVCLALLVAVACA). The propeptide occupies 21–36 (RRRDMMSDDELDFHLS). 3 disulfides stabilise this stretch: C42/C82, C44/C72, and C65/C83.

The protein belongs to the sea anemone sodium channel inhibitory toxin family. Type II subfamily. In terms of tissue distribution, expressed in ectodermal glands and in clumps outside of the extodermal layer. Is not expressed in nematocytes. In adult female tissues, shows similar expression levels in mesenteries (gametes-producing tissue), tentacles, pharynx and physa.

The protein resides in the secreted. Functionally, binds to site 3 of voltage-gated sodium channels and inhibits the inactivation process. Is highly active on DmNav1/TipE (drosophila) and is only extremely weakly active on rat Nav1.4-beta-1/SCN4A-SCN1B, and on human Nav1.5-beta-1/SCN5A-beta-1. This reveals high specificity for arthropod over mammalian channels. In vivo, when released into the medium, this recombinant toxin induces impaired swimming, paralysis and death of the crustacean A.nauplii within several hours. Also causes paralysis of cherry shrimps immediately after injection at very low doses. Its effect on zebrafish (D.rerio) larvae is also rapid, since it induces tail twitching accompanied by impaired swimming after 20 minutes and complete paralysis within 45 minutes. It has also been observed to cause death of zebrafish larvae within 1 hour. The chain is N.vectensis toxin 1 5 from Nematostella vectensis (Starlet sea anemone).